Reading from the N-terminus, the 408-residue chain is Histidine--tRNA ligase (408 aa).

This sequence belongs to the class-II aminoacyl-tRNA synthetase family. In terms of assembly, homodimer.

Its subcellular location is the cytoplasm. The enzyme catalyses tRNA(His) + L-histidine + ATP = L-histidyl-tRNA(His) + AMP + diphosphate + H(+). This is Histidine--tRNA ligase from Campylobacter jejuni subsp. jejuni serotype O:23/36 (strain 81-176).